Reading from the N-terminus, the 481-residue chain is ATP synthase subunit beta (481 aa).

ATP is bound at residue Gly160–Thr167.

It belongs to the ATPase alpha/beta chains family. F-type ATPases have 2 components, CF(1) - the catalytic core - and CF(0) - the membrane proton channel. CF(1) has five subunits: alpha(3), beta(3), gamma(1), delta(1), epsilon(1). CF(0) has three main subunits: a(1), b(2) and c(9-12). The alpha and beta chains form an alternating ring which encloses part of the gamma chain. CF(1) is attached to CF(0) by a central stalk formed by the gamma and epsilon chains, while a peripheral stalk is formed by the delta and b chains.

It is found in the cell inner membrane. It carries out the reaction ATP + H2O + 4 H(+)(in) = ADP + phosphate + 5 H(+)(out). Its function is as follows. Produces ATP from ADP in the presence of a proton gradient across the membrane. The catalytic sites are hosted primarily by the beta subunits. In Anaeromyxobacter sp. (strain Fw109-5), this protein is ATP synthase subunit beta.